A 515-amino-acid polypeptide reads, in one-letter code: 2-isopropylmalate synthase (515 aa).

The region spanning 4-266 (IKFFDTTLRD…ETRLNLQEIK (263 aa)) is the Pyruvate carboxyltransferase domain. The Mn(2+) site is built by Asp13, His201, His203, and Asn237. A regulatory domain region spans residues 391–515 (QLSSIQVQYG…RAENEKVATS (125 aa)).

The protein belongs to the alpha-IPM synthase/homocitrate synthase family. LeuA type 1 subfamily. Homodimer. It depends on Mn(2+) as a cofactor.

It localises to the cytoplasm. The enzyme catalyses 3-methyl-2-oxobutanoate + acetyl-CoA + H2O = (2S)-2-isopropylmalate + CoA + H(+). It participates in amino-acid biosynthesis; L-leucine biosynthesis; L-leucine from 3-methyl-2-oxobutanoate: step 1/4. Functionally, catalyzes the condensation of the acetyl group of acetyl-CoA with 3-methyl-2-oxobutanoate (2-ketoisovalerate) to form 3-carboxy-3-hydroxy-4-methylpentanoate (2-isopropylmalate). This is 2-isopropylmalate synthase from Geobacillus stearothermophilus (Bacillus stearothermophilus).